The sequence spans 734 residues: Homoaconitase, mitochondrial (734 aa).

Residues 1–25 (MGASNLLRFGAVTRISTPLLSRRSL) constitute a mitochondrion transit peptide. 3 residues coordinate [4Fe-4S] cluster: cysteine 367, cysteine 427, and cysteine 430.

It belongs to the aconitase/IPM isomerase family. It depends on [4Fe-4S] cluster as a cofactor.

The protein localises to the mitochondrion. The catalysed reaction is (2R,3S)-homoisocitrate = cis-homoaconitate + H2O. It functions in the pathway amino-acid biosynthesis; L-lysine biosynthesis via AAA pathway; L-alpha-aminoadipate from 2-oxoglutarate: step 3/5. In terms of biological role, catalyzes the reversible hydration of cis-homoaconitate to (2R,3S)-homoisocitrate, a step in the alpha-aminoadipate pathway for lysine biosynthesis. The chain is Homoaconitase, mitochondrial (LYS4) from Mycosarcoma maydis (Corn smut fungus).